The primary structure comprises 320 residues: MSFASETKKELTNLEVKHCCLRAELSALLRMNGSLSFSGGRMTVDVQTENAAIARRIYMLLRKGYDVAVELFVRKKMRLKKNNVYIVRITDGAASLLRELYIWNGDFSFVHDISPELIKKKCCKRSYLRGAFLAGGSVNNPETSSYHLEIFSLYEEHNRSLCELMNSHFFLNAKTLERKKGFITYLKEAEKIAEFLNIIGAHQALLRFEDIRIVRDMRNSVNRLVNCETANLNKTIGAALRQVENIRYIDETIGLDSLPAKLREIAKLRIEHQDVTLKELGEMVAGGKISKSGINHRLRKIDEIAERLRAGKPVDFHKSL.

The segment at residues threonine 276 to alanine 310 is a DNA-binding region (H-T-H motif).

This sequence belongs to the WhiA family.

Functionally, involved in cell division and chromosome segregation. The polypeptide is Probable cell division protein WhiA (Geobacillus thermodenitrificans (strain NG80-2)).